The primary structure comprises 624 residues: tRNA uridine 5-carboxymethylaminomethyl modification enzyme MnmG (624 aa).

FAD contacts are provided by residues 14-19 (GGGHAG), valine 126, and serine 181. Position 273-287 (273-287 (GPRYCPSIEDKVVRF)) interacts with NAD(+). An FAD-binding site is contributed by glutamine 370.

The protein belongs to the MnmG family. As to quaternary structure, homodimer. Heterotetramer of two MnmE and two MnmG subunits. FAD is required as a cofactor.

Its subcellular location is the cytoplasm. Functionally, NAD-binding protein involved in the addition of a carboxymethylaminomethyl (cmnm) group at the wobble position (U34) of certain tRNAs, forming tRNA-cmnm(5)s(2)U34. This is tRNA uridine 5-carboxymethylaminomethyl modification enzyme MnmG from Geotalea uraniireducens (strain Rf4) (Geobacter uraniireducens).